The sequence spans 514 residues: MKEAGQMQNLESARAGRSVSTQTGSMTGQIPRLSKVNLFTLLSLWMELFPAEAQRQKSQKNEEGKHGPLGDNEERTRVSTDKRQVKRTGLVVVKNMKIVGLHCSSEDLHAGQIALIKHGSRLKNCDLYFSRKPCSACLKMIVNAGVNRISYWPADPEISLLTEASSSEDAKLDAKAVERLKSNSRAHVCVLLQPLVCYMVQFVEETSYKCDFIQKITKTLPDANTDFYYECKQERIKEYEMLFLVSNEEMHKQILMTIGLENLCENPYFSNLRQNMKDLILLLATVASSVPNFKHFGFYRSNPEQINEIHNQSLPQEIARHCMVQARLLAYRTEDHKTGVGAVIWAEGKSRSCDGTGAMYFVGCGYNAFPVGSEYADFPHMDDKQKDREIRKFRYIIHAEQNALTFRCQEIKPEERSMIFVTKCPCDECVPLIKGAGIKQIYAGDVDVGKKKADISYMRFGELEGVSKFTWQLNPSGAYGLEQNEPERRENGVLRPVPQKEEQHQDKKLRLGIH.

Polar residues-rich tracts occupy residues 1 to 11 and 18 to 27; these read MKEAGQMQNLE and SVSTQTGSMT. 2 disordered regions span residues 1–27 and 55–83; these read MKEAGQMQNLESARAGRSVSTQTGSMT and RQKSQKNEEGKHGPLGDNEERTRVSTDKR. Over residues 59 to 83 the composition is skewed to basic and acidic residues; it reads QKNEEGKHGPLGDNEERTRVSTDKR. Residues 70–168 enclose the CMP/dCMP-type deaminase 1 domain; that stretch reads GDNEERTRVS…SLLTEASSSE (99 aa). Zn(2+) contacts are provided by histidine 109, cysteine 134, and cysteine 137. Residues 271 to 283 carry the Nuclear export signal motif; sequence NLRQNMKDLILLL. The region spanning 317-482 is the CMP/dCMP-type deaminase 2 domain; that stretch reads EIARHCMVQA…LNPSGAYGLE (166 aa). Histidine 398 contacts Zn(2+). The active-site Proton donor is glutamate 400. Zn(2+) contacts are provided by cysteine 426 and cysteine 429. The disordered stretch occupies residues 480–514; it reads GLEQNEPERRENGVLRPVPQKEEQHQDKKLRLGIH. A compositionally biased stretch (basic and acidic residues) spans 485–514; that stretch reads EPERRENGVLRPVPQKEEQHQDKKLRLGIH. The short motif at 488 to 510 is the Bipartite nuclear localization signal element; that stretch reads RRENGVLRPVPQKEEQHQDKKLR.

It belongs to the cytidine and deoxycytidylate deaminase family. It depends on Zn(2+) as a cofactor. As to expression, widely expressed. Expressed at high levels in the testis.

It is found in the cytoplasm. Its subcellular location is the nucleus. It catalyses the reaction 2'-deoxycytidine + H2O + H(+) = 2'-deoxyuridine + NH4(+). It carries out the reaction cytidine + H2O + H(+) = uridine + NH4(+). Functionally, catalyzes the deamination of cytidine and deoxycytidine into uridine and deoxyuridine, respectively. May play an important role in testicular development and spermatogenesis. The protein is Cytidine and dCMP deaminase domain-containing protein 1 (CDADC1) of Homo sapiens (Human).